The primary structure comprises 413 residues: Sprouty-related, EVH1 domain-containing protein 2 (413 aa).

The 118-residue stretch at 5-122 folds into the WH1 domain; sequence THPNDDSYIV…RGVRKALEDL (118 aa). Positions 122–163 are disordered; that stretch reads LTEGSTTSSSTLQNEAELGDDDVFTTATDSSSNSSQKKDHST. Positions 195–248 constitute a KBD domain; sequence FSRNLFPFEDEEIVRINPRERWMITGYEDYRYAAVPDKFIQPEDSDSYVQISKN. Residues 303 to 411 form the SPR domain; that stretch reads RCVYCRDMFN…CGCCGGKHKA (109 aa).

Its subcellular location is the cell membrane. It localises to the cytoplasmic vesicle. The protein resides in the secretory vesicle membrane. It is found in the cytoplasm. Its function is as follows. Negatively regulates Ras signaling pathways and downstream activation of MAP kinases. The chain is Sprouty-related, EVH1 domain-containing protein 2 (spred2) from Danio rerio (Zebrafish).